The sequence spans 278 residues: MSKANISSKLKKVVESIYNPKLADSWDNTGLLLEAPFPRTNASSVLLTIDLTEKVAEEAISNKLVSSIVAYHPIIFRGLKAITMEDPQQRSLLKLAAEGIHVYSPHTAVDAAVDGVNDWLAQGIAGGRNNIKSVVPTQQNSVMAEAEGYGRICELKIPTTLRELVQRAKELTGLQYVQVCAPNGLDSHISKVSLCAGSGGSVVMNTDADLYFTGELSHHQVLAAMAKGISVILCGHSNTERGYLKDVMCQKLASSFHKEGVDANVIVSSMDADPLTTM.

It belongs to the GTP cyclohydrolase I type 2/NIF3 family.

In Schizosaccharomyces pombe (strain 972 / ATCC 24843) (Fission yeast), this protein is Protein NIF3 homolog.